The primary structure comprises 231 residues: Ribonuclease 3 (231 aa).

The region spanning 5–134 (QKKLKNDYGL…FLGALFIDQG (130 aa)) is the RNase III domain. Glu47 contacts Mg(2+). Asp51 is an active-site residue. Residues Asn120 and Glu123 each coordinate Mg(2+). Glu123 is an active-site residue. The 70-residue stretch at 160–229 (DYKTELQEVL…AENAIKGQNH (70 aa)) folds into the DRBM domain.

This sequence belongs to the ribonuclease III family. As to quaternary structure, homodimer. Mg(2+) serves as cofactor.

It localises to the cytoplasm. The catalysed reaction is Endonucleolytic cleavage to 5'-phosphomonoester.. Functionally, digests double-stranded RNA. Involved in the processing of primary rRNA transcript to yield the immediate precursors to the large and small rRNAs (23S and 16S). Processes some mRNAs, and tRNAs when they are encoded in the rRNA operon. Processes pre-crRNA and tracrRNA of type II CRISPR loci if present in the organism. The polypeptide is Ribonuclease 3 (Lactococcus lactis subsp. lactis (strain IL1403) (Streptococcus lactis)).